A 157-amino-acid polypeptide reads, in one-letter code: SsrA-binding protein (157 aa).

The disordered stretch occupies residues lysine 131–glycine 157. Positions glutamine 132 to arginine 151 are enriched in basic and acidic residues.

This sequence belongs to the SmpB family.

The protein localises to the cytoplasm. Its function is as follows. Required for rescue of stalled ribosomes mediated by trans-translation. Binds to transfer-messenger RNA (tmRNA), required for stable association of tmRNA with ribosomes. tmRNA and SmpB together mimic tRNA shape, replacing the anticodon stem-loop with SmpB. tmRNA is encoded by the ssrA gene; the 2 termini fold to resemble tRNA(Ala) and it encodes a 'tag peptide', a short internal open reading frame. During trans-translation Ala-aminoacylated tmRNA acts like a tRNA, entering the A-site of stalled ribosomes, displacing the stalled mRNA. The ribosome then switches to translate the ORF on the tmRNA; the nascent peptide is terminated with the 'tag peptide' encoded by the tmRNA and targeted for degradation. The ribosome is freed to recommence translation, which seems to be the essential function of trans-translation. The chain is SsrA-binding protein from Rhodopseudomonas palustris (strain BisB18).